Reading from the N-terminus, the 252-residue chain is Ribosomal RNA small subunit methyltransferase J (252 aa).

S-adenosyl-L-methionine-binding positions include 101 to 102 (RD), 117 to 118 (ER), 153 to 154 (SS), and aspartate 171.

The protein belongs to the methyltransferase superfamily. RsmJ family.

It is found in the cytoplasm. It carries out the reaction guanosine(1516) in 16S rRNA + S-adenosyl-L-methionine = N(2)-methylguanosine(1516) in 16S rRNA + S-adenosyl-L-homocysteine + H(+). In terms of biological role, specifically methylates the guanosine in position 1516 of 16S rRNA. This is Ribosomal RNA small subunit methyltransferase J from Salmonella typhimurium (strain LT2 / SGSC1412 / ATCC 700720).